The primary structure comprises 329 residues: Probable nicotianamine synthase 7 (329 aa).

The protein belongs to the nicotianamine synthase (NAS)-like family.

It catalyses the reaction 3 S-adenosyl-L-methionine = nicotianamine + 3 S-methyl-5'-thioadenosine + 3 H(+). Its function is as follows. Synthesizes nicotianamine, a polyamine that is the first intermediate in the synthesis of the phytosiderophores of the mugineic acid type found in gramineae which serves as a sensor for the physiological iron status within the plant, and/or might be involved in the transport of iron. The chain is Probable nicotianamine synthase 7 (NAS7) from Hordeum vulgare (Barley).